The chain runs to 175 residues: MKAQPIRAAIRIIGIDPGLRRTGWGVIESEGNRLIYVGCGSVEPPDDLPLASRLLAIHEGLAKVLADFQPLEAAVEQTFVNKDGVATLKLGQARGIAMLAPAMFGITVAEYAPNQVKKTVVGAGHADKGQIAVMLKILLPKAEPPSADAADALAIAITHAHHRQGQALRMKVAGL.

Catalysis depends on residues D16, E76, and D148. Mg(2+) contacts are provided by D16, E76, and D148.

This sequence belongs to the RuvC family. Homodimer which binds Holliday junction (HJ) DNA. The HJ becomes 2-fold symmetrical on binding to RuvC with unstacked arms; it has a different conformation from HJ DNA in complex with RuvA. In the full resolvosome a probable DNA-RuvA(4)-RuvB(12)-RuvC(2) complex forms which resolves the HJ. The cofactor is Mg(2+).

It localises to the cytoplasm. The enzyme catalyses Endonucleolytic cleavage at a junction such as a reciprocal single-stranded crossover between two homologous DNA duplexes (Holliday junction).. Functionally, the RuvA-RuvB-RuvC complex processes Holliday junction (HJ) DNA during genetic recombination and DNA repair. Endonuclease that resolves HJ intermediates. Cleaves cruciform DNA by making single-stranded nicks across the HJ at symmetrical positions within the homologous arms, yielding a 5'-phosphate and a 3'-hydroxyl group; requires a central core of homology in the junction. The consensus cleavage sequence is 5'-(A/T)TT(C/G)-3'. Cleavage occurs on the 3'-side of the TT dinucleotide at the point of strand exchange. HJ branch migration catalyzed by RuvA-RuvB allows RuvC to scan DNA until it finds its consensus sequence, where it cleaves and resolves the cruciform DNA. This Bradyrhizobium sp. (strain ORS 278) protein is Crossover junction endodeoxyribonuclease RuvC.